A 226-amino-acid polypeptide reads, in one-letter code: Ribonuclease 3 (226 aa).

The 123-residue stretch at 7 to 129 (LPRLCRTLGY…IIGAIYLDSD (123 aa)) folds into the RNase III domain. Glu-42 is a Mg(2+) binding site. Residue Asp-46 is part of the active site. The Mg(2+) site is built by Asp-115 and Glu-118. Residue Glu-118 is part of the active site. A DRBM domain is found at 156–226 (DAKTLLQEYL…AAQVLELLKK (71 aa)).

It belongs to the ribonuclease III family. In terms of assembly, homodimer. Mg(2+) is required as a cofactor.

It localises to the cytoplasm. It catalyses the reaction Endonucleolytic cleavage to 5'-phosphomonoester.. Its function is as follows. Digests double-stranded RNA. Involved in the processing of primary rRNA transcript to yield the immediate precursors to the large and small rRNAs (23S and 16S). Processes some mRNAs, and tRNAs when they are encoded in the rRNA operon. Processes pre-crRNA and tracrRNA of type II CRISPR loci if present in the organism. This is Ribonuclease 3 from Shewanella sp. (strain W3-18-1).